A 313-amino-acid chain; its full sequence is Formimidoylglutamase (313 aa).

Mn(2+) contacts are provided by His-130, Asp-155, His-157, Asp-159, Asp-241, and Asp-243.

This sequence belongs to the arginase family. Mn(2+) serves as cofactor.

It catalyses the reaction N-formimidoyl-L-glutamate + H2O = formamide + L-glutamate. Its pathway is amino-acid degradation; L-histidine degradation into L-glutamate; L-glutamate from N-formimidoyl-L-glutamate (hydrolase route): step 1/1. In terms of biological role, catalyzes the conversion of N-formimidoyl-L-glutamate to L-glutamate and formamide. In Salmonella paratyphi B (strain ATCC BAA-1250 / SPB7), this protein is Formimidoylglutamase.